Here is a 159-residue protein sequence, read N- to C-terminus: Protein-export protein SecB (159 aa).

It belongs to the SecB family. In terms of assembly, homotetramer, a dimer of dimers. One homotetramer interacts with 1 SecA dimer.

The protein localises to the cytoplasm. One of the proteins required for the normal export of preproteins out of the cell cytoplasm. It is a molecular chaperone that binds to a subset of precursor proteins, maintaining them in a translocation-competent state. It also specifically binds to its receptor SecA. The sequence is that of Protein-export protein SecB from Nitrosospira multiformis (strain ATCC 25196 / NCIMB 11849 / C 71).